A 362-amino-acid chain; its full sequence is Protein-glutamate methylesterase/protein-glutamine glutaminase (362 aa).

One can recognise a Response regulatory domain in the interval 5–122; the sequence is KVLCVDDSAL…RDGMLDYSEK (118 aa). D56 bears the 4-aspartylphosphate mark. The region spanning 163 to 355 is the CheB-type methylesterase domain; that stretch reads LLSTEKLIIV…RRVMARLSSM (193 aa). Residues S175, H201, and D297 contribute to the active site.

This sequence belongs to the CheB family. Phosphorylated by CheA. Phosphorylation of the N-terminal regulatory domain activates the methylesterase activity.

The protein resides in the cytoplasm. It catalyses the reaction [protein]-L-glutamate 5-O-methyl ester + H2O = L-glutamyl-[protein] + methanol + H(+). The enzyme catalyses L-glutaminyl-[protein] + H2O = L-glutamyl-[protein] + NH4(+). Involved in chemotaxis. Part of a chemotaxis signal transduction system that modulates chemotaxis in response to various stimuli. Catalyzes the demethylation of specific methylglutamate residues introduced into the chemoreceptors (methyl-accepting chemotaxis proteins or MCP) by CheR. Also mediates the irreversible deamidation of specific glutamine residues to glutamic acid. The protein is Protein-glutamate methylesterase/protein-glutamine glutaminase of Paraburkholderia xenovorans (strain LB400).